We begin with the raw amino-acid sequence, 466 residues long: Ribulose bisphosphate carboxylase large chain (466 aa).

The residue at position 5 (Lys5) is an N6,N6,N6-trimethyllysine. Substrate contacts are provided by Asn114 and Thr164. Lys166 acts as the Proton acceptor in catalysis. Substrate is bound at residue Lys168. 3 residues coordinate Mg(2+): Lys192, Asp194, and Glu195. Lys192 bears the N6-carboxylysine mark. His285 acts as the Proton acceptor in catalysis. 3 residues coordinate substrate: Arg286, His318, and Ser370.

The protein belongs to the RuBisCO large chain family. Type I subfamily. In terms of assembly, heterohexadecamer of 8 large chains and 8 small chains; disulfide-linked. The disulfide link is formed within the large subunit homodimers. Mg(2+) serves as cofactor. Post-translationally, the disulfide bond which can form in the large chain dimeric partners within the hexadecamer appears to be associated with oxidative stress and protein turnover.

It localises to the plastid. The protein localises to the chloroplast. The enzyme catalyses 2 (2R)-3-phosphoglycerate + 2 H(+) = D-ribulose 1,5-bisphosphate + CO2 + H2O. The catalysed reaction is D-ribulose 1,5-bisphosphate + O2 = 2-phosphoglycolate + (2R)-3-phosphoglycerate + 2 H(+). RuBisCO catalyzes two reactions: the carboxylation of D-ribulose 1,5-bisphosphate, the primary event in carbon dioxide fixation, as well as the oxidative fragmentation of the pentose substrate in the photorespiration process. Both reactions occur simultaneously and in competition at the same active site. The protein is Ribulose bisphosphate carboxylase large chain of Drosera filiformis (Thread-leaved sundew).